A 117-amino-acid polypeptide reads, in one-letter code: Regulator of ribonuclease activity B (117 aa).

This sequence belongs to the RraB family. As to quaternary structure, interacts with the C-terminal region of Rne.

It is found in the cytoplasm. Globally modulates RNA abundance by binding to RNase E (Rne) and regulating its endonucleolytic activity. Can modulate Rne action in a substrate-dependent manner by altering the composition of the degradosome. The chain is Regulator of ribonuclease activity B from Pseudoalteromonas atlantica (strain T6c / ATCC BAA-1087).